Consider the following 457-residue polypeptide: Probable xyloglucan 6-xylosyltransferase 3 (457 aa).

Residues 1 to 40 (MGKEDGFRTQKRVSTASSAAAGVLPTTMASGGVRRPPPRG) are disordered. The Cytoplasmic segment spans residues 1–51 (MGKEDGFRTQKRVSTASSAAAGVLPTTMASGGVRRPPPRGRQIQKTFNNVK). The helical; Signal-anchor for type II membrane protein transmembrane segment at 52 to 71 (MTILCGFVTILVLRGTIGIN) threads the bilayer. Residues 72 to 457 (FGTSDADVVN…TTPLKIEARS (386 aa)) lie on the Lumenal side of the membrane. N-linked (GlcNAc...) asparagine glycosylation is found at Asn115 and Asn431.

The protein belongs to the glycosyltransferase 34 family.

It localises to the golgi apparatus membrane. It catalyses the reaction Transfers an alpha-D-xylosyl residue from UDP-D-xylose to a glucose residue in xyloglucan, forming an alpha-(1-&gt;6)-D-xylosyl-D-glucose linkage.. In terms of biological role, probable xyloglucan xylosyltransferase involved in the biosynthesis of xyloglucan. In Arabidopsis thaliana (Mouse-ear cress), this protein is Probable xyloglucan 6-xylosyltransferase 3.